The chain runs to 305 residues: Small ribosomal subunit protein bS1B (305 aa).

S1 motif domains lie at 29-98 (GQTV…LSRR), 116-180 (GKTL…LTQR), and 194-262 (GNIY…LSTR).

This sequence belongs to the bacterial ribosomal protein bS1 family.

Binds mRNA. The chain is Small ribosomal subunit protein bS1B (rps1b) from Synechocystis sp. (strain ATCC 27184 / PCC 6803 / Kazusa).